Here is a 398-residue protein sequence, read N- to C-terminus: Phosphoglycerate kinase (398 aa).

Substrate-binding positions include 21–23 (DFN), arginine 36, 59–62 (HLGR), arginine 119, and arginine 157. ATP is bound by residues lysine 208, glycine 296, glutamate 327, and 354–357 (GGDS).

This sequence belongs to the phosphoglycerate kinase family. In terms of assembly, monomer.

The protein localises to the cytoplasm. It carries out the reaction (2R)-3-phosphoglycerate + ATP = (2R)-3-phospho-glyceroyl phosphate + ADP. Its pathway is carbohydrate degradation; glycolysis; pyruvate from D-glyceraldehyde 3-phosphate: step 2/5. The chain is Phosphoglycerate kinase from Streptococcus pneumoniae serotype 19F (strain G54).